The primary structure comprises 159 residues: Trafficking protein particle complex subunit 6A (159 aa).

Residue Ser33 is modified to Phosphoserine.

It belongs to the TRAPP small subunits family. BET3 subfamily. As to quaternary structure, part of the multisubunit transport protein particle (TRAPP) complex. Heterodimer with TRAPPC3. The heterodimer TRAPPC3-TRAPPC6A interacts with TRAPPC2L. Interacts with TRAPPC2L. In terms of tissue distribution, ubiquitous, with lowest expression in skeletal muscle and brain and highest in kidney, liver and testis, as well as in cultured melanocytes.

Its subcellular location is the golgi apparatus. The protein localises to the cis-Golgi network. The protein resides in the endoplasmic reticulum. Its function is as follows. May play a role in vesicular transport during the biogenesis of melanosomes. In Mus musculus (Mouse), this protein is Trafficking protein particle complex subunit 6A.